The primary structure comprises 324 residues: Biotin synthase 1 (324 aa).

The Radical SAM core domain maps to 37-256 (NAIETASLLS…VALARILMPA (220 aa)). The [4Fe-4S] cluster site is built by Cys-52, Cys-56, and Cys-59. Cys-96, Cys-127, Cys-187, and Arg-260 together coordinate [2Fe-2S] cluster.

The protein belongs to the radical SAM superfamily. Biotin synthase family. In terms of assembly, homodimer. [4Fe-4S] cluster is required as a cofactor. [2Fe-2S] cluster serves as cofactor.

It catalyses the reaction (4R,5S)-dethiobiotin + (sulfur carrier)-SH + 2 reduced [2Fe-2S]-[ferredoxin] + 2 S-adenosyl-L-methionine = (sulfur carrier)-H + biotin + 2 5'-deoxyadenosine + 2 L-methionine + 2 oxidized [2Fe-2S]-[ferredoxin]. It participates in cofactor biosynthesis; biotin biosynthesis; biotin from 7,8-diaminononanoate: step 2/2. Functionally, catalyzes the conversion of dethiobiotin (DTB) to biotin by the insertion of a sulfur atom into dethiobiotin via a radical-based mechanism. The sequence is that of Biotin synthase 1 from Paracoccus denitrificans (strain Pd 1222).